Consider the following 484-residue polypeptide: Glycogen synthase (484 aa).

Lysine 15 lines the ADP-alpha-D-glucose pocket.

Belongs to the glycosyltransferase 1 family. Bacterial/plant glycogen synthase subfamily.

The catalysed reaction is [(1-&gt;4)-alpha-D-glucosyl](n) + ADP-alpha-D-glucose = [(1-&gt;4)-alpha-D-glucosyl](n+1) + ADP + H(+). The protein operates within glycan biosynthesis; glycogen biosynthesis. Synthesizes alpha-1,4-glucan chains using ADP-glucose. The chain is Glycogen synthase (glgA) from Bacillus subtilis (strain 168).